Reading from the N-terminus, the 144-residue chain is uncharacterized protein (144 aa).

The next 4 helical transmembrane spans lie at 27-47 (VVCA…IPDI), 49-69 (LLPI…LLAL), 83-103 (IVLL…DATV), and 106-126 (ALDM…ILNV).

It is found in the membrane. This is an uncharacterized protein from Saccharomyces cerevisiae (strain ATCC 204508 / S288c) (Baker's yeast).